The chain runs to 210 residues: Imidazoleglycerol-phosphate dehydratase (210 aa).

It belongs to the imidazoleglycerol-phosphate dehydratase family.

It carries out the reaction D-erythro-1-(imidazol-4-yl)glycerol 3-phosphate = 3-(imidazol-4-yl)-2-oxopropyl phosphate + H2O. The protein operates within amino-acid biosynthesis; L-histidine biosynthesis; L-histidine from 5-phospho-alpha-D-ribose 1-diphosphate: step 6/9. This chain is Imidazoleglycerol-phosphate dehydratase (HIS3), found in Candida glabrata (strain ATCC 2001 / BCRC 20586 / JCM 3761 / NBRC 0622 / NRRL Y-65 / CBS 138) (Yeast).